Consider the following 886-residue polypeptide: Coatomer subunit gamma (886 aa).

HEAT repeat units lie at residues 66-103 (VEAT…SSDE), 288-325 (RELT…THPM), 327-359 (VTNC…TGNE), 360-397 (SSVE…KFPL), and 472-509 (SDPS…MVES). The interval 592-613 (SQPLAEKKAQGKKPTGLGAPPA) is disordered.

The protein belongs to the COPG family. In terms of assembly, oligomeric complex that consists of at least the alpha, beta, beta', gamma, delta, epsilon and zeta subunits.

It is found in the cytoplasm. The protein localises to the golgi apparatus membrane. It localises to the cytoplasmic vesicle. The protein resides in the COPI-coated vesicle membrane. Functionally, the coatomer is a cytosolic protein complex that binds to dilysine motifs and reversibly associates with Golgi non-clathrin-coated vesicles, which further mediate biosynthetic protein transport from the ER, via the Golgi up to the trans Golgi network. Coatomer complex is required for budding from Golgi membranes, and is essential for the retrograde Golgi-to-ER transport of dilysine-tagged proteins. This chain is Coatomer subunit gamma, found in Arabidopsis thaliana (Mouse-ear cress).